The primary structure comprises 147 residues: MEDDFKHLVRISRKDVDGNKTIEQALTEIKGVGISLSTTMCRTLDLDSEAQIGYIADEDVLKIEEILENPQKFNIPNWMLNRREDYETGENIHLIESDLDMTLRDDLNRMKKTRSYKGRRHEAGLPVRGQRTKSTFRNSSSVGVKRS.

Residues 115-147 (SYKGRRHEAGLPVRGQRTKSTFRNSSSVGVKRS) form a disordered region. A compositionally biased stretch (polar residues) spans 132 to 147 (TKSTFRNSSSVGVKRS).

It belongs to the universal ribosomal protein uS13 family. Part of the 30S ribosomal subunit. Forms a loose heterodimer with protein S19. Forms two bridges to the 50S subunit in the 70S ribosome.

Functionally, located at the top of the head of the 30S subunit, it contacts several helices of the 16S rRNA. In the 70S ribosome it contacts the 23S rRNA (bridge B1a) and protein L5 of the 50S subunit (bridge B1b), connecting the 2 subunits; these bridges are implicated in subunit movement. The protein is Small ribosomal subunit protein uS13 of Methanobrevibacter smithii (strain ATCC 35061 / DSM 861 / OCM 144 / PS).